Reading from the N-terminus, the 398-residue chain is 1-deoxy-D-xylulose 5-phosphate reductoisomerase (398 aa).

NADPH-binding residues include Thr-10, Gly-11, Ser-12, Ile-13, and Asn-124. 1-deoxy-D-xylulose 5-phosphate is bound at residue Lys-125. Glu-126 lines the NADPH pocket. A Mn(2+)-binding site is contributed by Asp-150. 1-deoxy-D-xylulose 5-phosphate is bound by residues Ser-151, Glu-152, Ser-186, and His-209. Mn(2+) is bound at residue Glu-152. NADPH is bound at residue Gly-215. 1-deoxy-D-xylulose 5-phosphate contacts are provided by Ser-222, Asn-227, Lys-228, and Glu-231. Residue Glu-231 coordinates Mn(2+).

It belongs to the DXR family. The cofactor is Mg(2+). Requires Mn(2+) as cofactor.

The catalysed reaction is 2-C-methyl-D-erythritol 4-phosphate + NADP(+) = 1-deoxy-D-xylulose 5-phosphate + NADPH + H(+). It participates in isoprenoid biosynthesis; isopentenyl diphosphate biosynthesis via DXP pathway; isopentenyl diphosphate from 1-deoxy-D-xylulose 5-phosphate: step 1/6. Catalyzes the NADPH-dependent rearrangement and reduction of 1-deoxy-D-xylulose-5-phosphate (DXP) to 2-C-methyl-D-erythritol 4-phosphate (MEP). In Tolumonas auensis (strain DSM 9187 / NBRC 110442 / TA 4), this protein is 1-deoxy-D-xylulose 5-phosphate reductoisomerase.